The primary structure comprises 397 residues: Alpha-2B adrenergic receptor (397 aa).

The helical transmembrane segment at alanine 1–leucine 25 threads the bilayer. Residues threonine 26 to leucine 36 lie on the Cytoplasmic side of the membrane. A helical transmembrane segment spans residues phenylalanine 37 to leucine 62. At glycine 63–cysteine 72 the chain is on the extracellular side. Cysteines 72 and 151 form a disulfide. The helical transmembrane segment at lysine 73 to leucine 95 threads the bilayer. At aspartate 96–lysine 117 the chain is on the cytoplasmic side. A helical membrane pass occupies residues cysteine 118–aspartate 140. The Extracellular portion of the chain corresponds to glutamine 141–glutamate 156. The helical transmembrane segment at threonine 157 to leucine 180 threads the bilayer. Residues arginine 181–valine 361 are Cytoplasmic-facing. Disordered stretches follow at residues glycine 193–proline 212 and alanine 230–proline 319. Residues serine 280–glutamate 300 show a composition bias toward acidic residues. Over residues proline 301–proline 319 the composition is skewed to low complexity. Residues leucine 362 to isoleucine 385 form a helical membrane-spanning segment. Over cysteine 386–histidine 394 the chain is Extracellular. A helical transmembrane segment spans residues aspartate 395–phenylalanine 397.

This sequence belongs to the G-protein coupled receptor 1 family. Adrenergic receptor subfamily. ADRA2B sub-subfamily. Interacts with RAB26. Interacts with PPP1R9B.

It is found in the cell membrane. Alpha-2 adrenergic receptors mediate the catecholamine-induced inhibition of adenylate cyclase through the action of G proteins. The polypeptide is Alpha-2B adrenergic receptor (ADRA2B) (Talpa europaea (European mole)).